Here is a 475-residue protein sequence, read N- to C-terminus: Ribulose bisphosphate carboxylase large chain (475 aa).

Residues asparagine 123 and threonine 173 each contribute to the substrate site. Lysine 175 functions as the Proton acceptor in the catalytic mechanism. Substrate is bound at residue lysine 177. Residues lysine 201, aspartate 203, and glutamate 204 each contribute to the Mg(2+) site. Lysine 201 is modified (N6-carboxylysine). Histidine 294 functions as the Proton acceptor in the catalytic mechanism. The substrate site is built by arginine 295, histidine 327, and serine 379.

This sequence belongs to the RuBisCO large chain family. Type I subfamily. In terms of assembly, heterohexadecamer of 8 large chains and 8 small chains. The cofactor is Mg(2+).

It is found in the plastid. Its subcellular location is the chloroplast. It catalyses the reaction 2 (2R)-3-phosphoglycerate + 2 H(+) = D-ribulose 1,5-bisphosphate + CO2 + H2O. The enzyme catalyses D-ribulose 1,5-bisphosphate + O2 = 2-phosphoglycolate + (2R)-3-phosphoglycerate + 2 H(+). Functionally, ruBisCO catalyzes two reactions: the carboxylation of D-ribulose 1,5-bisphosphate, the primary event in carbon dioxide fixation, as well as the oxidative fragmentation of the pentose substrate in the photorespiration process. Both reactions occur simultaneously and in competition at the same active site. This is Ribulose bisphosphate carboxylase large chain from Bigelowiella natans (Pedinomonas minutissima).